The following is a 275-amino-acid chain: Vitamin B12-binding protein (275 aa).

Residues 1–19 (MMNKLCFALPLIFSDASFA) form the signal peptide. Positions 25-272 (RIISLAPHST…EVCEHFETVR (248 aa)) constitute a Fe/B12 periplasmic-binding domain. A disulfide bridge links C185 with C265.

This sequence belongs to the BtuF family. In terms of assembly, the complex is composed of two ATP-binding proteins (BtuD), two transmembrane proteins (BtuC) and a solute-binding protein (BtuF).

It is found in the periplasm. Its function is as follows. Part of the ABC transporter complex BtuCDF involved in vitamin B12 import. Binds vitamin B12 and delivers it to the periplasmic surface of BtuC. This Vibrio campbellii (strain ATCC BAA-1116) protein is Vitamin B12-binding protein.